The chain runs to 213 residues: 3,4-dihydroxy-2-butanone 4-phosphate synthase (213 aa).

Residues 37–38, Asp42, 150–154, and Glu174 contribute to the D-ribulose 5-phosphate site; these read RE and RAGHT. Glu38 contacts Mg(2+). His153 is a binding site for Mg(2+).

This sequence belongs to the DHBP synthase family. As to quaternary structure, homodimer. Mg(2+) is required as a cofactor. Requires Mn(2+) as cofactor.

It carries out the reaction D-ribulose 5-phosphate = (2S)-2-hydroxy-3-oxobutyl phosphate + formate + H(+). Its pathway is cofactor biosynthesis; riboflavin biosynthesis; 2-hydroxy-3-oxobutyl phosphate from D-ribulose 5-phosphate: step 1/1. In terms of biological role, catalyzes the conversion of D-ribulose 5-phosphate to formate and 3,4-dihydroxy-2-butanone 4-phosphate. The polypeptide is 3,4-dihydroxy-2-butanone 4-phosphate synthase (Wigglesworthia glossinidia brevipalpis).